A 643-amino-acid chain; its full sequence is Extracellular metalloproteinase 4 (643 aa).

An N-terminal signal peptide occupies residues 1 to 18 (MHGLLLAGLLALPLNVLA). The propeptide occupies 19 to 254 (HPTESHSSGI…VHSVVDYVSA (236 aa)). Basic and acidic residues predominate over residues 47 to 57 (TKSDAVPKQDD). Residues 47–71 (TKSDAVPKQDDESFTTSSTGDDNVS) form a disordered region. Positions 60–71 (FTTSSTGDDNVS) are enriched in polar residues. 2 N-linked (GlcNAc...) asparagine glycosylation sites follow: N271 and N420. H437 is a Zn(2+) binding site. The active site involves E438. H441 is a binding site for Zn(2+). N-linked (GlcNAc...) asparagine glycosylation is found at N510 and N553.

It belongs to the peptidase M36 family. Zn(2+) serves as cofactor.

It is found in the secreted. Its function is as follows. Secreted metalloproteinase probably acting as a virulence factor. This Arthroderma benhamiae (Trichophyton mentagrophytes) protein is Extracellular metalloproteinase 4 (MEP4).